Here is a 218-residue protein sequence, read N- to C-terminus: Replication protein RepB (218 aa).

Residues 1–26 (MKSESKIDWTVPRPNKNPKTKQPYKR) form a disordered region. Basic residues predominate over residues 16 to 26 (KNPKTKQPYKR).

Belongs to the Gram-positive plasmids replication protein type 2 family.

Functionally, is essential for plasmid replication. Nicks the positive strand at the plus origin of replication. The sequence is that of Replication protein RepB (repB) from Lactiplantibacillus plantarum (Lactobacillus plantarum).